The primary structure comprises 792 residues: Chloride channel protein CLC-d (792 aa).

The next 12 membrane-spanning stretches (helical) occupy residues 78 to 98 (FFSLLIGIGTGLAAVFINLSV), 119 to 139 (AGFIVYLLINLVLVFSSAYII), 170 to 190 (RTLIGKIFGSIGSVGGGLALG), 195 to 215 (LVHTGACIASLLGQGGSTKYH), 237 to 257 (GCAAGVAAAFRAPVGGVLFAL), 267 to 287 (QLMWRVFFTSAIVAVVVRTAM), 320 to 340 (LLPMAVIGVIGGLLGALFNQL), 361 to 381 (IIEACIISCITSAISFGLPLL), 451 to 471 (LLTFLAMFYTLAVVTFGTAVP), 474 to 494 (QFVPGIMIGSTYGRLVGMFVV), 508 to 528 (ALLGAASFLGGSMRMTVSLCV), and 529 to 549 (IMVEITNNLKLLPLIMLVLLI). CBS domains are found at residues 592–652 (QSQK…KVDF) and 704–761 (LNPS…SSAV). A helical transmembrane segment spans residues 731-751 (HLFVVPRPSRVIGLITRKDLL).

Belongs to the chloride channel (TC 2.A.49) family. In terms of assembly, homodimer. As to expression, broadly expressed in the plant, but predominantly in the silique.

The protein localises to the membrane. In terms of biological role, voltage-gated chloride channel. The sequence is that of Chloride channel protein CLC-d (CLC-D) from Arabidopsis thaliana (Mouse-ear cress).